Here is a 232-residue protein sequence, read N- to C-terminus: Small ribosomal subunit protein uS2 (232 aa).

This sequence belongs to the universal ribosomal protein uS2 family.

The polypeptide is Small ribosomal subunit protein uS2 (Heliobacterium modesticaldum (strain ATCC 51547 / Ice1)).